The following is a 131-amino-acid chain: Glycine cleavage system H protein (131 aa).

The region spanning 24–106 (RVTVGISDHA…YGEGWMFVVE (83 aa)) is the Lipoyl-binding domain. Residue Lys65 is modified to N6-lipoyllysine.

It belongs to the GcvH family. As to quaternary structure, the glycine cleavage system is composed of four proteins: P, T, L and H. The cofactor is (R)-lipoate.

The glycine cleavage system catalyzes the degradation of glycine. The H protein shuttles the methylamine group of glycine from the P protein to the T protein. In Stenotrophomonas maltophilia (strain K279a), this protein is Glycine cleavage system H protein.